Here is a 227-residue protein sequence, read N- to C-terminus: UPF0173 metal-dependent hydrolase BCE_4747 (227 aa).

The protein belongs to the UPF0173 family.

This chain is UPF0173 metal-dependent hydrolase BCE_4747, found in Bacillus cereus (strain ATCC 10987 / NRS 248).